Consider the following 277-residue polypeptide: Hydroxyethylthiazole kinase (277 aa).

Residue methionine 56 coordinates substrate. Residues arginine 131 and threonine 177 each coordinate ATP. Alanine 204 contributes to the substrate binding site.

Belongs to the Thz kinase family. Mg(2+) is required as a cofactor.

The catalysed reaction is 5-(2-hydroxyethyl)-4-methylthiazole + ATP = 4-methyl-5-(2-phosphooxyethyl)-thiazole + ADP + H(+). It functions in the pathway cofactor biosynthesis; thiamine diphosphate biosynthesis; 4-methyl-5-(2-phosphoethyl)-thiazole from 5-(2-hydroxyethyl)-4-methylthiazole: step 1/1. Its function is as follows. Catalyzes the phosphorylation of the hydroxyl group of 4-methyl-5-beta-hydroxyethylthiazole (THZ). The polypeptide is Hydroxyethylthiazole kinase (Gemmatimonas aurantiaca (strain DSM 14586 / JCM 11422 / NBRC 100505 / T-27)).